The following is a 273-amino-acid chain: DNA repair protein RecO (273 aa).

Belongs to the RecO family.

In terms of biological role, involved in DNA repair and RecF pathway recombination. The chain is DNA repair protein RecO from Saccharopolyspora erythraea (strain ATCC 11635 / DSM 40517 / JCM 4748 / NBRC 13426 / NCIMB 8594 / NRRL 2338).